The sequence spans 476 residues: Bifunctional protein HldE (476 aa).

Residues 1–319 (MKVSLPAFEK…EALALHHGES (319 aa)) are ribokinase. 195-198 (NMSE) contributes to the ATP binding site. Asp264 is a catalytic residue. Positions 345–476 (MTNGCFDILH…AIIQNIMANQ (132 aa)) are cytidylyltransferase.

The protein in the N-terminal section; belongs to the carbohydrate kinase PfkB family. It in the C-terminal section; belongs to the cytidylyltransferase family. As to quaternary structure, homodimer.

The catalysed reaction is D-glycero-beta-D-manno-heptose 7-phosphate + ATP = D-glycero-beta-D-manno-heptose 1,7-bisphosphate + ADP + H(+). It catalyses the reaction D-glycero-beta-D-manno-heptose 1-phosphate + ATP + H(+) = ADP-D-glycero-beta-D-manno-heptose + diphosphate. The protein operates within nucleotide-sugar biosynthesis; ADP-L-glycero-beta-D-manno-heptose biosynthesis; ADP-L-glycero-beta-D-manno-heptose from D-glycero-beta-D-manno-heptose 7-phosphate: step 1/4. It functions in the pathway nucleotide-sugar biosynthesis; ADP-L-glycero-beta-D-manno-heptose biosynthesis; ADP-L-glycero-beta-D-manno-heptose from D-glycero-beta-D-manno-heptose 7-phosphate: step 3/4. In terms of biological role, catalyzes the phosphorylation of D-glycero-D-manno-heptose 7-phosphate at the C-1 position to selectively form D-glycero-beta-D-manno-heptose-1,7-bisphosphate. Its function is as follows. Catalyzes the ADP transfer from ATP to D-glycero-beta-D-manno-heptose 1-phosphate, yielding ADP-D-glycero-beta-D-manno-heptose. This is Bifunctional protein HldE from Shewanella sp. (strain W3-18-1).